Reading from the N-terminus, the 86-residue chain is Small ribosomal subunit protein uS17 (86 aa).

It belongs to the universal ribosomal protein uS17 family. In terms of assembly, part of the 30S ribosomal subunit.

Its function is as follows. One of the primary rRNA binding proteins, it binds specifically to the 5'-end of 16S ribosomal RNA. The sequence is that of Small ribosomal subunit protein uS17 from Streptococcus pyogenes serotype M6 (strain ATCC BAA-946 / MGAS10394).